Reading from the N-terminus, the 811-residue chain is MSNISTKDIRKSKPKRGSGFDLLEVTESLGYQTHRKNGRNSWSKDDDNMLRSLVNESAKELGYENGLEDVKTIQQSNHLSKCIAWDVLATRFKHTVRTSKDVRKRWTGSLDPNLKKGKWTQEEDEQLLKAYEEHGPHWLSISMDIPGRTEDQCAKRYIEVLGPGSKGRLREWTLEEDLNLISKVKAYGTKWRKISSEMEFRPSLTCRNRWRKIITMVVRGQASEVITKAIKENKNIDMTDGKLRQHPIADSDIRSDSTPNKEEQLQLSQQNNPSLIKQDILNVKENESSKLPRLKDNDGPILNDSKPQALPPLKEISAPPPIRMTQVGQTHTSGSIRSKVSLPIEGLSQMNKQSPGGISDSPQTSLPPAFNPASLDEHMMNSNSISDSPKHAYSTVKTREPNSSSTQWKFTLKDGQGLSISNGTIDSTKLVKELVDQAKKYSLKISIHQHIHNHYVTSTDHPVSSNTGLSNIGNINGNPLLMDSFPHMGRQLGNGLPGLNSNSDTFNPEYRTSLDNMDSDFLSRTPNYNAFSLEATSHNPADNANELGSQSNRETNSPSVFYPQANTLIPTNSTATNNEIIQGNVSANSMSPNFNGTNGKAPSSTASYTTSGSEMPPDVGPNRIAHFNYLPPTIRPHLGSSDATRGADLNKLLNPSPNSVRSNGSKTKKKEKRKSESSQHHSSSSVTTNKFNHIDQSEISRTTSRSDTPLRDEDGLDFWETLRSLATTNPNPPVEKSAENDGAKPQVVHQGIGSHTEDSSLGSHSGGYDFFNELLDKKADTLHNEAKKTSEHDMTSGGSTDNGSVLPLNPS.

The Myb-like domain maps to 34–110 (HRKNGRNSWS…DVRKRWTGSL (77 aa)). HTH myb-type domains are found at residues 111–165 (DPNL…GPGS) and 166–218 (KGRL…TMVV). DNA-binding regions (H-T-H motif) lie at residues 138 to 161 (WLSISMDIPGRTEDQCAKRYIEVL) and 191 to 214 (WRKISSEMEFRPSLTCRNRWRKII). Positions 237-264 (DMTDGKLRQHPIADSDIRSDSTPNKEEQ) are enriched in basic and acidic residues. Disordered regions lie at residues 237–320 (DMTD…SAPP), 348–379 (SQMNKQSPGGISDSPQTSLPPAFNPASLDEHM), 535–713 (ATSH…LRDE), and 782–811 (LHNEAKKTSEHDMTSGGSTDNGSVLPLNPS). Over residues 265–275 (LQLSQQNNPSL) the composition is skewed to low complexity. Residues 282–298 (NVKENESSKLPRLKDND) show a composition bias toward basic and acidic residues. Polar residues-rich tracts occupy residues 348 to 366 (SQMNKQSPGGISDSPQTSL), 535 to 613 (ATSH…TSGS), and 653 to 664 (LNPSPNSVRSNG). A compositionally biased stretch (basic and acidic residues) spans 782-794 (LHNEAKKTSEHDM).

As to quaternary structure, monomer.

It is found in the nucleus. Activates HIS4 transcription only in combination with PHO2/BAS2. BAS1 is also involved in the regulation of the purine biosynthesis pathway. The chain is Myb-like DNA-binding protein BAS1 (BAS1) from Saccharomyces cerevisiae (strain ATCC 204508 / S288c) (Baker's yeast).